The sequence spans 159 residues: Phosphopantetheine adenylyltransferase (159 aa).

Position 10 (threonine 10) interacts with substrate. ATP contacts are provided by residues 10 to 11 (TF) and histidine 18. Substrate-binding residues include lysine 42, methionine 74, and arginine 88. Residues 89 to 91 (GLR), glutamate 99, and 124 to 130 (WSFISSS) contribute to the ATP site.

It belongs to the bacterial CoaD family. Homohexamer. Mg(2+) serves as cofactor.

Its subcellular location is the cytoplasm. The enzyme catalyses (R)-4'-phosphopantetheine + ATP + H(+) = 3'-dephospho-CoA + diphosphate. Its pathway is cofactor biosynthesis; coenzyme A biosynthesis; CoA from (R)-pantothenate: step 4/5. Its function is as follows. Reversibly transfers an adenylyl group from ATP to 4'-phosphopantetheine, yielding dephospho-CoA (dPCoA) and pyrophosphate. The chain is Phosphopantetheine adenylyltransferase from Escherichia fergusonii (strain ATCC 35469 / DSM 13698 / CCUG 18766 / IAM 14443 / JCM 21226 / LMG 7866 / NBRC 102419 / NCTC 12128 / CDC 0568-73).